We begin with the raw amino-acid sequence, 173 residues long: ATP synthase subunit b (173 aa).

The chain crosses the membrane as a helical span at residues 25 to 45 (LINLVIVIGVLYWFLKGFLGG).

Belongs to the ATPase B chain family. In terms of assembly, F-type ATPases have 2 components, F(1) - the catalytic core - and F(0) - the membrane proton channel. F(1) has five subunits: alpha(3), beta(3), gamma(1), delta(1), epsilon(1). F(0) has four main subunits: a(1), b(1), b'(1) and c(10-14). The alpha and beta chains form an alternating ring which encloses part of the gamma chain. F(1) is attached to F(0) by a central stalk formed by the gamma and epsilon chains, while a peripheral stalk is formed by the delta, b and b' chains.

The protein localises to the cellular thylakoid membrane. Its function is as follows. F(1)F(0) ATP synthase produces ATP from ADP in the presence of a proton or sodium gradient. F-type ATPases consist of two structural domains, F(1) containing the extramembraneous catalytic core and F(0) containing the membrane proton channel, linked together by a central stalk and a peripheral stalk. During catalysis, ATP synthesis in the catalytic domain of F(1) is coupled via a rotary mechanism of the central stalk subunits to proton translocation. In terms of biological role, component of the F(0) channel, it forms part of the peripheral stalk, linking F(1) to F(0). The polypeptide is ATP synthase subunit b (Synechococcus sp. (strain CC9311)).